Consider the following 203-residue polypeptide: MAGKSSNGDGVKFADDAGSGNSIDGIAIIDPGTVTSASGGSGSDAGSGDSGNTPRKRGRPAGSGTGAKRGRPAGNSAAKKVPGNLGVEKILFSLHLMASSALKVEELALDEKEAEALAGAVQEVASHYDITPDPKIMAWAGLFGVCASIYGPRVAAYKMRAAAEKRDKKEAAKPMAQKVQEAKPTEHDPAAPYIEQLPVSNTL.

Disordered regions lie at residues methionine 1 to lysine 80 and arginine 166 to leucine 203. The span at glycine 39–aspartate 49 shows a compositional bias: gly residues. Over residues glutamine 180–proline 189 the composition is skewed to basic and acidic residues.

Assembly protein. The major coat protein P3 and two assembly factors (P10 and P17) are needed during the assembly of the virus particle inside the host cell, when the capsid protein multimers are capable of enclosing the host-derived membrane, containing the virus-encoded membrane-associated proteins. This chain is Protein P10 (X), found in Acinetobacter calcoaceticus (Arthrobacter siderocapsulatus).